The chain runs to 408 residues: Tryptophan synthase beta chain (408 aa).

Position 103 is an N6-(pyridoxal phosphate)lysine (Lys-103).

This sequence belongs to the TrpB family. Tetramer of two alpha and two beta chains. Pyridoxal 5'-phosphate is required as a cofactor.

The catalysed reaction is (1S,2R)-1-C-(indol-3-yl)glycerol 3-phosphate + L-serine = D-glyceraldehyde 3-phosphate + L-tryptophan + H2O. The protein operates within amino-acid biosynthesis; L-tryptophan biosynthesis; L-tryptophan from chorismate: step 5/5. In terms of biological role, the beta subunit is responsible for the synthesis of L-tryptophan from indole and L-serine. The chain is Tryptophan synthase beta chain from Koribacter versatilis (strain Ellin345).